The sequence spans 243 residues: Aliphatic sulfonates import ATP-binding protein SsuB (243 aa).

The region spanning 11-230 is the ABC transporter domain; that stretch reads ATVRGLRKSY…RTHPSFASYT (220 aa). An ATP-binding site is contributed by 43–50; the sequence is GRSGSGKS.

The protein belongs to the ABC transporter superfamily. Aliphatic sulfonates importer (TC 3.A.1.17.2) family. In terms of assembly, the complex is composed of two ATP-binding proteins (SsuB), two transmembrane proteins (SsuC) and a solute-binding protein (SsuA).

The protein localises to the cell membrane. It catalyses the reaction ATP + H2O + aliphatic sulfonate-[sulfonate-binding protein]Side 1 = ADP + phosphate + aliphatic sulfonateSide 2 + [sulfonate-binding protein]Side 1.. Its function is as follows. Part of the ABC transporter complex SsuABC involved in aliphatic sulfonates import. Responsible for energy coupling to the transport system. Is also involved in taurine transport. Seems to not be involved in long chain aliphatic sulfonates transport (chain length of eight carbon atoms or more). The protein is Aliphatic sulfonates import ATP-binding protein SsuB of Corynebacterium glutamicum (strain ATCC 13032 / DSM 20300 / JCM 1318 / BCRC 11384 / CCUG 27702 / LMG 3730 / NBRC 12168 / NCIMB 10025 / NRRL B-2784 / 534).